We begin with the raw amino-acid sequence, 58 residues long: Putative calcium channel toxin 196 (58 aa).

Residues 1–16 (GSLLLVLFLLSVICYA) form the signal peptide. A propeptide spanning residues 17 to 26 (EIAAGPTKCQ) is cleaved from the precursor. 3 disulfides stabilise this stretch: Cys-25-Cys-38, Cys-31-Cys-43, and Cys-37-Cys-52.

The protein belongs to the scorpion calcin-like family. KTX subfamily. As to expression, expressed by the venom gland.

The protein localises to the secreted. Functionally, may inhibit voltage-gated potassium channels Kv1.1/KCNA1, hKv1.2/KCNA2, and Kv1.3/KCNA3. May also increase intracellular calcium release through the activation of nuclear inositol 1,4,5-trisphosphate receptors (ITPR) of cardiomyocytes, thereby causing an increase in the contraction frequency of these cells. The polypeptide is Putative calcium channel toxin 196 (Lychas mucronatus (Chinese swimming scorpion)).